The chain runs to 357 residues: Guanine nucleotide-binding protein alpha-1 subunit (357 aa).

A lipid anchor (N-myristoyl glycine) is attached at glycine 2. Cysteine 4 carries S-palmitoyl cysteine lipidation. The G-alpha domain maps to 32 to 357 (NVIKLLLLGA…SSKLKGCGLF (326 aa)). Positions 35-48 (KLLLLGAGESGKST) are G1 motif. Glutamate 43, serine 44, glycine 45, lysine 46, serine 47, threonine 48, aspartate 151, leucine 176, threonine 182, glycine 204, asparagine 270, lysine 271, aspartate 273, and alanine 329 together coordinate GTP. Serine 47 is a Mg(2+) binding site. The interval 174–182 (DILHTRVPT) is G2 motif. Threonine 182 provides a ligand contact to Mg(2+). Positions 197 to 206 (FRVFDVGGQR) are G3 motif. Residues 266–273 (ILFLNKVD) are G4 motif. Positions 327–332 (TCATDT) are G5 motif.

Belongs to the G-alpha family. G(q) subfamily. In terms of assembly, g proteins are composed of 3 units; alpha, beta and gamma. The alpha chain contains the guanine nucleotide binding site. Requires Mg(2+) as cofactor.

Guanine nucleotide-binding proteins (G proteins) are involved as modulators or transducers in various transmembrane signaling systems. The chain is Guanine nucleotide-binding protein alpha-1 subunit (gpa-1) from Caenorhabditis briggsae.